Here is a 153-residue protein sequence, read N- to C-terminus: Ubiquitin-conjugating enzyme E2-18 kDa (153 aa).

In terms of domain architecture, UBC core spans Ala-2–Glu-149. The active-site Glycyl thioester intermediate is Cys-86.

The protein belongs to the ubiquitin-conjugating enzyme family.

The catalysed reaction is S-ubiquitinyl-[E1 ubiquitin-activating enzyme]-L-cysteine + [E2 ubiquitin-conjugating enzyme]-L-cysteine = [E1 ubiquitin-activating enzyme]-L-cysteine + S-ubiquitinyl-[E2 ubiquitin-conjugating enzyme]-L-cysteine.. It participates in protein modification; protein ubiquitination. Functionally, catalyzes the covalent attachment of ubiquitin to other proteins. This Drosophila melanogaster (Fruit fly) protein is Ubiquitin-conjugating enzyme E2-18 kDa (Ubc84D).